Consider the following 583-residue polypeptide: RuBisCO large subunit-binding protein subunit alpha, chloroplastic (583 aa).

Polar residues predominate over residues 1 to 14 (MATANALSSPSVLC). The tract at residues 1 to 35 (MATANALSSPSVLCSSRQGKLSGGSQQKGQRVSYR) is disordered. The transit peptide at 1–45 (MATANALSSPSVLCSSRQGKLSGGSQQKGQRVSYRKANRRFSLRA) directs the protein to the chloroplast. Residues 15 to 31 (SSRQGKLSGGSQQKGQR) are compositionally biased toward low complexity. Residue Ser89 is modified to Phosphoserine.

The protein belongs to the chaperonin (HSP60) family. In terms of assembly, oligomer of probably six alpha and six beta subunits.

Its subcellular location is the plastid. It localises to the chloroplast. In terms of biological role, this protein binds RuBisCO small and large subunits and is implicated in the assembly of the enzyme oligomer. The sequence is that of RuBisCO large subunit-binding protein subunit alpha, chloroplastic from Brassica napus (Rape).